A 190-amino-acid polypeptide reads, in one-letter code: GTP cyclohydrolase 1 1 (190 aa).

The protein belongs to the GTP cyclohydrolase I family. As to quaternary structure, homomer.

The catalysed reaction is GTP + H2O = 7,8-dihydroneopterin 3'-triphosphate + formate + H(+). Its pathway is cofactor biosynthesis; 7,8-dihydroneopterin triphosphate biosynthesis; 7,8-dihydroneopterin triphosphate from GTP: step 1/1. The chain is GTP cyclohydrolase 1 1 from Pseudomonas putida (strain ATCC 47054 / DSM 6125 / CFBP 8728 / NCIMB 11950 / KT2440).